A 255-amino-acid chain; its full sequence is Taurine import ATP-binding protein TauB (255 aa).

The region spanning 2-229 is the ABC transporter domain; it reads LNVSGLWAEY…RYAEGEPCRA (228 aa). ATP is bound at residue 34–41; the sequence is GPSGCGKT.

Belongs to the ABC transporter superfamily. Taurine importer (TC 3.A.1.17.1) family. The complex is composed of two ATP-binding proteins (TauB), two transmembrane proteins (TauC) and a solute-binding protein (TauA).

The protein localises to the cell inner membrane. The catalysed reaction is taurine(out) + ATP + H2O = taurine(in) + ADP + phosphate + H(+). Part of the ABC transporter complex TauABC involved in taurine import. Responsible for energy coupling to the transport system. The protein is Taurine import ATP-binding protein TauB of Yersinia pestis bv. Antiqua (strain Antiqua).